Here is a 357-residue protein sequence, read N- to C-terminus: Fructose-bisphosphate aldolase, cytoplasmic isozyme (357 aa).

Positions 53 and 142 each coordinate substrate. The active-site Proton acceptor is the Glu183. The active-site Schiff-base intermediate with dihydroxyacetone-P is Lys225.

It belongs to the class I fructose-bisphosphate aldolase family.

The protein resides in the cytoplasm. It carries out the reaction beta-D-fructose 1,6-bisphosphate = D-glyceraldehyde 3-phosphate + dihydroxyacetone phosphate. The protein operates within carbohydrate degradation; glycolysis; D-glyceraldehyde 3-phosphate and glycerone phosphate from D-glucose: step 4/4. This chain is Fructose-bisphosphate aldolase, cytoplasmic isozyme, found in Spinacia oleracea (Spinach).